Reading from the N-terminus, the 215-residue chain is Pyrrolidone-carboxylate peptidase (215 aa).

Catalysis depends on residues glutamate 81, cysteine 144, and histidine 168.

It belongs to the peptidase C15 family. As to quaternary structure, homotetramer.

It localises to the cytoplasm. The catalysed reaction is Release of an N-terminal pyroglutamyl group from a polypeptide, the second amino acid generally not being Pro.. Removes 5-oxoproline from various penultimate amino acid residues except L-proline. The chain is Pyrrolidone-carboxylate peptidase from Bacillus licheniformis (strain ATCC 14580 / DSM 13 / JCM 2505 / CCUG 7422 / NBRC 12200 / NCIMB 9375 / NCTC 10341 / NRRL NRS-1264 / Gibson 46).